The primary structure comprises 321 residues: Glucokinase (321 aa).

ATP is bound at residue 8-13 (GDVGGT).

The protein belongs to the bacterial glucokinase family.

It localises to the cytoplasm. It carries out the reaction D-glucose + ATP = D-glucose 6-phosphate + ADP + H(+). This is Glucokinase from Escherichia fergusonii (strain ATCC 35469 / DSM 13698 / CCUG 18766 / IAM 14443 / JCM 21226 / LMG 7866 / NBRC 102419 / NCTC 12128 / CDC 0568-73).